The primary structure comprises 626 residues: Fructose-1,6-bisphosphatase class 3 (626 aa).

The protein belongs to the FBPase class 3 family. The cofactor is Mn(2+).

It carries out the reaction beta-D-fructose 1,6-bisphosphate + H2O = beta-D-fructose 6-phosphate + phosphate. It functions in the pathway carbohydrate biosynthesis; gluconeogenesis. The sequence is that of Fructose-1,6-bisphosphatase class 3 from Enterococcus faecalis (strain ATCC 700802 / V583).